The primary structure comprises 185 residues: Threonylcarbamoyl-AMP synthase (185 aa).

The YrdC-like domain maps to 4-185 (SWRVQQAARE…LATGNIVRPA (182 aa)).

Belongs to the SUA5 family. TsaC subfamily.

It is found in the cytoplasm. It carries out the reaction L-threonine + hydrogencarbonate + ATP = L-threonylcarbamoyladenylate + diphosphate + H2O. Its function is as follows. Required for the formation of a threonylcarbamoyl group on adenosine at position 37 (t(6)A37) in tRNAs that read codons beginning with adenine. Catalyzes the conversion of L-threonine, HCO(3)(-)/CO(2) and ATP to give threonylcarbamoyl-AMP (TC-AMP) as the acyladenylate intermediate, with the release of diphosphate. In Pseudomonas fluorescens (strain Pf0-1), this protein is Threonylcarbamoyl-AMP synthase.